Here is a 645-residue protein sequence, read N- to C-terminus: MPMSEPIDWLPDGTPYSPRFGDRYHSELGGLDQARHVFLGGCGLPAAWADAPQWRILETGFGFGLNFLVAWEAWKADPRRPRLLHFVSAEAFPVSADAMRQAMPREPGLRLLAEELATRFQGLLPGVHRLAFEQGRVLLTLYIGDAQAMLRRQQITADSIYLDGFTPELNPDLWSADTLRALARHCRRGTQLSTWCVARTVRDGLAQHGFQVRKVDGVPPKRHNLHAVFDPAWQPRGPRAQPQEAITPRRCMVLGAGIAGAAAAASLSRRGWQVTVLDTADAPAAGASALPAGLFCPHVSPDDSLLSRLSRDGARLTLAQLQMLSGQGLLQPGTDWCDTGVLEHGVEAAPRLPRDWQSPGPGDHWSRPASADQLSAAGLPADAPACWHVQAGWVRPARLVQAQLALPGVRWQGRACVARLARTDTAGGAPVWQALDAQGNLLAEAELVVLALGPATNALLEHSLGAQAAWPLQPIRGQVSWDVHTPASAQAMPPFPVNGHGNLVPAMPLPGDAAGPGWVMGSTFERDQTALPPSPEDQAAAHAANGAKLAQLLPRAYQGLQGFFDAPPRATWGAVRVASPDRLPVVGPVSDQAPGLWALTAMGSRGLTLSLLCGELLAARLHDEPLPLDARLAAALASERLGRRR.

The tract at residues methionine 1–aspartate 230 is tRNA (mnm(5)s(2)U34)-methyltransferase. The interval leucine 254–arginine 645 is FAD-dependent cmnm(5)s(2)U34 oxidoreductase.

This sequence in the N-terminal section; belongs to the methyltransferase superfamily. tRNA (mnm(5)s(2)U34)-methyltransferase family. The protein in the C-terminal section; belongs to the DAO family. The cofactor is FAD.

It localises to the cytoplasm. The catalysed reaction is 5-aminomethyl-2-thiouridine(34) in tRNA + S-adenosyl-L-methionine = 5-methylaminomethyl-2-thiouridine(34) in tRNA + S-adenosyl-L-homocysteine + H(+). Functionally, catalyzes the last two steps in the biosynthesis of 5-methylaminomethyl-2-thiouridine (mnm(5)s(2)U) at the wobble position (U34) in tRNA. Catalyzes the FAD-dependent demodification of cmnm(5)s(2)U34 to nm(5)s(2)U34, followed by the transfer of a methyl group from S-adenosyl-L-methionine to nm(5)s(2)U34, to form mnm(5)s(2)U34. This Delftia acidovorans (strain DSM 14801 / SPH-1) protein is tRNA 5-methylaminomethyl-2-thiouridine biosynthesis bifunctional protein MnmC.